A 445-amino-acid polypeptide reads, in one-letter code: Rab GDP dissociation inhibitor beta (445 aa).

Met-1 bears the N-acetylmethionine mark. Lys-57 carries the post-translational modification N6-succinyllysine. N6-acetyllysine is present on Lys-112. Ser-130 is subject to Phosphoserine. N6-acetyllysine is present on Lys-269. Phosphoserine is present on Ser-382.

Belongs to the Rab GDI family. Interacts with RHOH. Interacts with the GDP-bound inactive forms of RAB3A, RAB3B, RAB3C, RAB5A, RAB5B, RAB5C, RAB8A, RAB8B, RAB10, RAB12, RAB35, and RAB43; binds RAB3D to a lesser extent. Interacts with DZIP1; this interaction negatively regulates the interaction of GDI2 with GDP-bound RAB8A. Ubiquitously expressed.

The protein resides in the cytoplasm. The protein localises to the membrane. Its subcellular location is the golgi apparatus. It localises to the trans-Golgi network. Functionally, GDP-dissociation inhibitor preventing the GDP to GTP exchange of most Rab proteins. By keeping these small GTPases in their inactive GDP-bound form regulates intracellular membrane trafficking. Negatively regulates protein transport to the cilium and ciliogenesis through the inhibition of RAB8A. This chain is Rab GDP dissociation inhibitor beta (GDI2), found in Bos taurus (Bovine).